The chain runs to 165 residues: Fimbrial protein (165 aa).

The signal sequence occupies residues 1–21; that stretch reads MRKSASAVAVLALIACGSAHA.

It localises to the fimbrium. Structural subunit of the sef14 fimbriae. The polypeptide is Fimbrial protein (sefA) (Salmonella enteritidis).